A 333-amino-acid polypeptide reads, in one-letter code: uncharacterized protein (333 aa).

The stretch at 94–122 (NLYREVWRELEEEQNKVEKLREYILKLDS) forms a coiled coil.

This is an uncharacterized protein from Aquifex aeolicus (strain VF5).